Consider the following 222-residue polypeptide: ATP-dependent Clp protease proteolytic subunit (222 aa).

Ser125 acts as the Nucleophile in catalysis. Residue His150 is part of the active site.

The protein belongs to the peptidase S14 family. Fourteen ClpP subunits assemble into 2 heptameric rings which stack back to back to give a disk-like structure with a central cavity, resembling the structure of eukaryotic proteasomes.

The protein resides in the cytoplasm. It carries out the reaction Hydrolysis of proteins to small peptides in the presence of ATP and magnesium. alpha-casein is the usual test substrate. In the absence of ATP, only oligopeptides shorter than five residues are hydrolyzed (such as succinyl-Leu-Tyr-|-NHMec, and Leu-Tyr-Leu-|-Tyr-Trp, in which cleavage of the -Tyr-|-Leu- and -Tyr-|-Trp bonds also occurs).. In terms of biological role, cleaves peptides in various proteins in a process that requires ATP hydrolysis. Has a chymotrypsin-like activity. Plays a major role in the degradation of misfolded proteins. This is ATP-dependent Clp protease proteolytic subunit from Porphyromonas gingivalis (strain ATCC BAA-308 / W83).